Consider the following 139-residue polypeptide: Endoribonuclease YbeY (139 aa).

The Zn(2+) site is built by His110, His114, and His120.

It belongs to the endoribonuclease YbeY family. Requires Zn(2+) as cofactor.

It is found in the cytoplasm. Single strand-specific metallo-endoribonuclease involved in late-stage 70S ribosome quality control and in maturation of the 3' terminus of the 16S rRNA. The chain is Endoribonuclease YbeY from Thermus thermophilus (strain ATCC BAA-163 / DSM 7039 / HB27).